The following is a 98-amino-acid chain: MSLTYMNMFMAFTISLLGLLLYRSHMMSSLLCLEGMMLSLFVMMTMTILNTHLTLASMIPIILLVFAACEAALGLSLLVMVSTTYGMDYVQNLNLLQC.

3 helical membrane-spanning segments follow: residues 1–21 (MSLT…GLLL), 29–49 (SLLC…MTIL), and 61–81 (IILL…LVMV).

This sequence belongs to the complex I subunit 4L family. In terms of assembly, core subunit of respiratory chain NADH dehydrogenase (Complex I) which is composed of 45 different subunits.

It is found in the mitochondrion inner membrane. The catalysed reaction is a ubiquinone + NADH + 5 H(+)(in) = a ubiquinol + NAD(+) + 4 H(+)(out). Its function is as follows. Core subunit of the mitochondrial membrane respiratory chain NADH dehydrogenase (Complex I) which catalyzes electron transfer from NADH through the respiratory chain, using ubiquinone as an electron acceptor. Part of the enzyme membrane arm which is embedded in the lipid bilayer and involved in proton translocation. This chain is NADH-ubiquinone oxidoreductase chain 4L (MT-ND4L), found in Vampyrodes caraccioli (Great stripe-faced bat).